The following is a 119-amino-acid chain: MAFKDPGKAPVDQEVAIHRIRITLTSRNVKSLEKVCADLIRGAKEKNLKVKGPVRMPTKTLRITTRKTPCGEGSKTWDRFQMRIHKRLIDLHSPSEIVKQITSISIEPGVEVEVTIADA.

It belongs to the universal ribosomal protein uS10 family. In terms of assembly, component of the 40S small ribosomal subunit.

Its subcellular location is the cytoplasm. In terms of biological role, component of the small ribosomal subunit. The ribosome is a large ribonucleoprotein complex responsible for the synthesis of proteins in the cell. The sequence is that of Small ribosomal subunit protein uS10 (rps20) from Xenopus laevis (African clawed frog).